The following is a 348-amino-acid chain: Probable dual-specificity RNA methyltransferase RlmN (348 aa).

The active-site Proton acceptor is the glutamate 93. Positions 99 to 333 (TEKRLTACLS…VSLRKSRGLD (235 aa)) constitute a Radical SAM core domain. An intrachain disulfide couples cysteine 106 to cysteine 338. [4Fe-4S] cluster contacts are provided by cysteine 113, cysteine 117, and cysteine 120. S-adenosyl-L-methionine is bound by residues 160 to 161 (GE), serine 190, 219 to 221 (SLH), and asparagine 295. Cysteine 338 functions as the S-methylcysteine intermediate in the catalytic mechanism.

The protein belongs to the radical SAM superfamily. RlmN family. [4Fe-4S] cluster is required as a cofactor.

The protein localises to the cytoplasm. It catalyses the reaction adenosine(2503) in 23S rRNA + 2 reduced [2Fe-2S]-[ferredoxin] + 2 S-adenosyl-L-methionine = 2-methyladenosine(2503) in 23S rRNA + 5'-deoxyadenosine + L-methionine + 2 oxidized [2Fe-2S]-[ferredoxin] + S-adenosyl-L-homocysteine. It carries out the reaction adenosine(37) in tRNA + 2 reduced [2Fe-2S]-[ferredoxin] + 2 S-adenosyl-L-methionine = 2-methyladenosine(37) in tRNA + 5'-deoxyadenosine + L-methionine + 2 oxidized [2Fe-2S]-[ferredoxin] + S-adenosyl-L-homocysteine. Functionally, specifically methylates position 2 of adenine 2503 in 23S rRNA and position 2 of adenine 37 in tRNAs. The protein is Probable dual-specificity RNA methyltransferase RlmN of Prochlorococcus marinus (strain AS9601).